The following is a 452-amino-acid chain: MSQRKYFGTDGVRGEVGGPVINAAFALRLGYAAGRVLAREHREHASGRGRNRPQVVIGKDTRISGYMLESALEAGLSAAGIDVLLAGPVPTPAVAYLTRTLRLAAGIVISASHNPYQDNGIKFFSAHGMKLPDDIEAAIEQAVDEPLGCVGSEELGRARRMADAQGRYIEFCKSTFPHDLDLNGLKLVVDAAHGAAYNVAPHVFRELGAEVHAIGVSPDGFNINKGVGALHPESLAEEVRARGADLGIALDGDADRLQMVDGTGRIYNGDELLYAIVRERMQRGPVAGVVGTLMTNYGLERQLQQIGVGFERANVGDRYVLEQMQARGWLYGGESSGHLLCLDCHTTGDGTIAALQVLTALRRADATLAEWVADLRMYPQRMINVPLAPGLDWKTHDGLARARGAVEAELAGRGRVLIRASGTEPKLRLMVEAEDEALAQASAQKLADSLGA.

Catalysis depends on Ser112, which acts as the Phosphoserine intermediate. Residues Ser112, Asp251, Asp253, and Asp255 each coordinate Mg(2+). Phosphoserine is present on Ser112.

It belongs to the phosphohexose mutase family. It depends on Mg(2+) as a cofactor. Post-translationally, activated by phosphorylation.

The catalysed reaction is alpha-D-glucosamine 1-phosphate = D-glucosamine 6-phosphate. Its function is as follows. Catalyzes the conversion of glucosamine-6-phosphate to glucosamine-1-phosphate. The chain is Phosphoglucosamine mutase from Bordetella pertussis (strain Tohama I / ATCC BAA-589 / NCTC 13251).